The chain runs to 208 residues: 3-demethoxyubiquinol 3-hydroxylase (208 aa).

Positions 57, 87, 90, 139, 171, and 174 each coordinate Fe cation.

It belongs to the COQ7 family. It depends on Fe cation as a cofactor.

It is found in the cell membrane. It carries out the reaction a 5-methoxy-2-methyl-3-(all-trans-polyprenyl)benzene-1,4-diol + AH2 + O2 = a 3-demethylubiquinol + A + H2O. It functions in the pathway cofactor biosynthesis; ubiquinone biosynthesis. In terms of biological role, catalyzes the hydroxylation of 2-nonaprenyl-3-methyl-6-methoxy-1,4-benzoquinol during ubiquinone biosynthesis. The protein is 3-demethoxyubiquinol 3-hydroxylase of Burkholderia thailandensis (strain ATCC 700388 / DSM 13276 / CCUG 48851 / CIP 106301 / E264).